A 328-amino-acid polypeptide reads, in one-letter code: Thiamine thiazole synthase (328 aa).

Residues A87, 108–109 (EA), G116, and V181 each bind substrate. 2,3-didehydroalanine (Cys) is present on C215. Substrate contacts are provided by residues D217, H232, M284, and 294–296 (RMG).

Belongs to the THI4 family. In terms of assembly, homooctamer. It depends on Fe cation as a cofactor. During the catalytic reaction, a sulfide is transferred from Cys-215 to a reaction intermediate, generating a dehydroalanine residue.

Its subcellular location is the cytoplasm. The protein resides in the nucleus. The enzyme catalyses [ADP-thiazole synthase]-L-cysteine + glycine + NAD(+) = [ADP-thiazole synthase]-dehydroalanine + ADP-5-ethyl-4-methylthiazole-2-carboxylate + nicotinamide + 3 H2O + 2 H(+). Involved in biosynthesis of the thiamine precursor thiazole. Catalyzes the conversion of NAD and glycine to adenosine diphosphate 5-(2-hydroxyethyl)-4-methylthiazole-2-carboxylic acid (ADT), an adenylated thiazole intermediate. The reaction includes an iron-dependent sulfide transfer from a conserved cysteine residue of the protein to a thiazole intermediate. The enzyme can only undergo a single turnover, which suggests it is a suicide enzyme. May have additional roles in adaptation to various stress conditions and in DNA damage tolerance. The sequence is that of Thiamine thiazole synthase (thi2) from Schizosaccharomyces pombe (strain 972 / ATCC 24843) (Fission yeast).